Consider the following 206-residue polypeptide: Accelerated cell death 11 (206 aa).

The an N-acylsphingoid base 1-phosphate site is built by D60, K64, R99, R103, and H143.

Belongs to the GLTP family. Interacts with BPA1, PRA1F2 and PRA1F3.

The protein resides in the cytoplasm. Functionally, exhibits selective intermembrane transfer of ceramide-1-phosphate (C1P) and phytoceramide-1-phosphate. Does not transport ceramide (Cer) or GalCer, suggesting a requirement for phosphate in the headgroup for functionality. Transports in vitro sphingosine, but not glycosphingolipids. Also has some in vitro activity with sphingomyelin, a lipid not detected in plant tissues. The transport function may be not directly involved in regulating cell death. Rather, perturbations in the function of ACD11 or related components could be monitored by R-proteins, which then mediate defense and programmed cell death (PCD), as proposed in the guard hypothesis. C1P transfer is stimulated by phosphatidylserine in C1P source vesicles. Regulates autophagy, inflammasome mediated IL1B and IL18 processing, and pyroptosis, but not apoptosis. This is Accelerated cell death 11 from Arabidopsis thaliana (Mouse-ear cress).